Consider the following 102-residue polypeptide: ATP-dependent Clp protease adapter protein ClpS (102 aa).

This sequence belongs to the ClpS family. Binds to the N-terminal domain of the chaperone ClpA.

Functionally, involved in the modulation of the specificity of the ClpAP-mediated ATP-dependent protein degradation. The protein is ATP-dependent Clp protease adapter protein ClpS of Shewanella amazonensis (strain ATCC BAA-1098 / SB2B).